The primary structure comprises 312 residues: Copper chaperone for superoxide dismutase, chloroplastic (312 aa).

The transit peptide at 1 to 78 directs the protein to the chloroplast; that stretch reads MVGFLRALTA…AAAAATADLS (78 aa). Residues 89-152 form the HMA domain; the sequence is ELMTEFMVDM…TLHQTGRDAR (64 aa). Residues cysteine 100, cysteine 103, cysteine 301, and cysteine 303 each coordinate Cu cation.

It in the C-terminal section; belongs to the Cu-Zn superoxide dismutase family. Cu(2+) serves as cofactor.

The protein localises to the plastid. It localises to the chloroplast. In terms of biological role, copper chaperone for superoxide dismutases (SODs). Binds copper ions and delivers them specifically to SODs. Is required for assistance in SODs disulfide bond formation and thereby activation of SODs. In Oryza sativa subsp. japonica (Rice), this protein is Copper chaperone for superoxide dismutase, chloroplastic (CCS).